Reading from the N-terminus, the 1073-residue chain is Ring-infected erythrocyte surface antigen (1073 aa).

The N-terminal stretch at Met1–Asn65 is a signal peptide. An N-linked (GlcNAc...) asparagine glycan is attached at Asn71. Residues Asp428 to Val444 show a composition bias toward acidic residues. Residues Asp428–Ala514 are disordered. The tandem repeats 1 stretch occupies residues Glu436–Ala504. Basic and acidic residues predominate over residues Asp445 to Asp456. Residues Glu457 to Val470 are compositionally biased toward acidic residues. Residues Ala476 to Glu502 are compositionally biased toward basic and acidic residues. Residues Asp521–Asp589 enclose the J domain. 3 N-linked (GlcNAc...) asparagine glycosylation sites follow: Asn639, Asn773, and Asn777. Residues Asn891–Glu1073 are tandem repeats 2. Basic and acidic residues predominate over residues Glu894–His930. The interval Glu894–Glu1073 is disordered. Residues Asp931–Glu1073 show a composition bias toward acidic residues.

The Tyr residues in the variant tetrameric sequences in the RESA repeat are possibly phosphorylated (by homology with band 3).

It localises to the cell membrane. Functionally, may disrupt the normal intermolecular interactions of the cytoplasmic domain of band 3 and thereby facilitate the invagination of the red cell membrane which is necessary for the formation of the parasitophorous vacuole. The sequence is that of Ring-infected erythrocyte surface antigen (RESA) from Plasmodium falciparum (isolate FC27 / Papua New Guinea).